A 131-amino-acid polypeptide reads, in one-letter code: Glycine cleavage system H protein (131 aa).

Residues 24-106 form the Lipoyl-binding domain; sequence RVTVGISDHA…YGEGWIFVVE (83 aa). Position 65 is an N6-lipoyllysine (K65).

This sequence belongs to the GcvH family. As to quaternary structure, the glycine cleavage system is composed of four proteins: P, T, L and H. It depends on (R)-lipoate as a cofactor.

Its function is as follows. The glycine cleavage system catalyzes the degradation of glycine. The H protein shuttles the methylamine group of glycine from the P protein to the T protein. This is Glycine cleavage system H protein from Xanthomonas euvesicatoria pv. vesicatoria (strain 85-10) (Xanthomonas campestris pv. vesicatoria).